Consider the following 258-residue polypeptide: Chymotrypsin-2 (258 aa).

Residues 1–17 (MLRKVFAVVSVLLVVSA) form the signal peptide. Positions 18 to 32 (AKVTKLVLDDHYVNR) are cleaved as a propeptide — activation peptide. Residues 33–255 (VVGGEVAKNG…YHEWVRTTMA (223 aa)) enclose the Peptidase S1 domain. Cys-59 and Cys-75 are joined by a disulfide. Catalysis depends on charge relay system residues His-74 and Asp-119. Cystine bridges form between Cys-182/Cys-198 and Cys-208/Cys-232. Ser-212 serves as the catalytic Charge relay system.

This sequence belongs to the peptidase S1 family. In terms of tissue distribution, after blood feeding, expression is induced in the midgut epithelium, followed by secretion into the midgut lumen.

Its subcellular location is the secreted. The enzyme catalyses Preferential cleavage: Tyr-|-Xaa, Trp-|-Xaa, Phe-|-Xaa, Leu-|-Xaa.. This is Chymotrypsin-2 (CHYM2) from Anopheles gambiae (African malaria mosquito).